Here is a 591-residue protein sequence, read N- to C-terminus: uncharacterized protein (591 aa).

The span at 1-10 (MSIRGVGGNG) shows a compositional bias: gly residues. Disordered stretches follow at residues 1-37 (MSIR…KVED), 110-135 (RSSA…GYRE), 324-344 (EESG…AQGP), and 487-517 (GHYQ…TPPL). Residues 11–32 (NSRIPSHNGDGSNRRSQNTKGN) are compositionally biased toward polar residues. The segment covering 110–132 (RSSATRAAESGSSSRTARGASSG) has biased composition (low complexity). Over residues 490-507 (QDPRASDYDLPRASDYDL) the composition is skewed to basic and acidic residues.

This sequence to C.muridarum TC_0268.

This is an uncharacterized protein from Chlamydia trachomatis serovar D (strain ATCC VR-885 / DSM 19411 / UW-3/Cx).